Reading from the N-terminus, the 644-residue chain is Phosphomethylpyrimidine synthase (644 aa).

Residues Asn-236, Met-265, Tyr-294, His-330, 350–352, 391–394, and Glu-430 contribute to the substrate site; these read SRG and DGLR. His-434 serves as a coordination point for Zn(2+). Tyr-457 is a binding site for substrate. His-498 is a Zn(2+) binding site. Positions 578, 581, and 586 each coordinate [4Fe-4S] cluster. The segment at 623–644 is disordered; that stretch reads RQKSEEFKASGSELYHPAVEAE.

Belongs to the ThiC family. Homodimer. [4Fe-4S] cluster serves as cofactor.

It carries out the reaction 5-amino-1-(5-phospho-beta-D-ribosyl)imidazole + S-adenosyl-L-methionine = 4-amino-2-methyl-5-(phosphooxymethyl)pyrimidine + CO + 5'-deoxyadenosine + formate + L-methionine + 3 H(+). It participates in cofactor biosynthesis; thiamine diphosphate biosynthesis. In terms of biological role, catalyzes the synthesis of the hydroxymethylpyrimidine phosphate (HMP-P) moiety of thiamine from aminoimidazole ribotide (AIR) in a radical S-adenosyl-L-methionine (SAM)-dependent reaction. This chain is Phosphomethylpyrimidine synthase, found in Aliivibrio fischeri (strain MJ11) (Vibrio fischeri).